The sequence spans 460 residues: Exodeoxyribonuclease 7 large subunit (460 aa).

The disordered stretch occupies residues 438-460 (ARVEKVNREEEKQSGSQKNGTRD). Residues 439-450 (RVEKVNREEEKQ) show a composition bias toward basic and acidic residues. The segment covering 451-460 (SGSQKNGTRD) has biased composition (polar residues).

This sequence belongs to the XseA family. As to quaternary structure, heterooligomer composed of large and small subunits.

It localises to the cytoplasm. The enzyme catalyses Exonucleolytic cleavage in either 5'- to 3'- or 3'- to 5'-direction to yield nucleoside 5'-phosphates.. Functionally, bidirectionally degrades single-stranded DNA into large acid-insoluble oligonucleotides, which are then degraded further into small acid-soluble oligonucleotides. This chain is Exodeoxyribonuclease 7 large subunit, found in Brevibacillus brevis (strain 47 / JCM 6285 / NBRC 100599).